A 190-amino-acid polypeptide reads, in one-letter code: Potassium-transporting ATPase KdpC subunit (190 aa).

A helical membrane pass occupies residues Thr-10–Gly-30.

This sequence belongs to the KdpC family. The system is composed of three essential subunits: KdpA, KdpB and KdpC.

Its subcellular location is the cell inner membrane. Functionally, part of the high-affinity ATP-driven potassium transport (or Kdp) system, which catalyzes the hydrolysis of ATP coupled with the electrogenic transport of potassium into the cytoplasm. This subunit acts as a catalytic chaperone that increases the ATP-binding affinity of the ATP-hydrolyzing subunit KdpB by the formation of a transient KdpB/KdpC/ATP ternary complex. This Escherichia coli O81 (strain ED1a) protein is Potassium-transporting ATPase KdpC subunit.